Here is a 465-residue protein sequence, read N- to C-terminus: 3-isopropylmalate dehydratase large subunit (465 aa).

3 residues coordinate [4Fe-4S] cluster: C347, C407, and C410.

It belongs to the aconitase/IPM isomerase family. LeuC type 1 subfamily. Heterodimer of LeuC and LeuD. [4Fe-4S] cluster serves as cofactor.

The catalysed reaction is (2R,3S)-3-isopropylmalate = (2S)-2-isopropylmalate. It participates in amino-acid biosynthesis; L-leucine biosynthesis; L-leucine from 3-methyl-2-oxobutanoate: step 2/4. In terms of biological role, catalyzes the isomerization between 2-isopropylmalate and 3-isopropylmalate, via the formation of 2-isopropylmaleate. The polypeptide is 3-isopropylmalate dehydratase large subunit (Aeromonas hydrophila subsp. hydrophila (strain ATCC 7966 / DSM 30187 / BCRC 13018 / CCUG 14551 / JCM 1027 / KCTC 2358 / NCIMB 9240 / NCTC 8049)).